The following is a 362-amino-acid chain: Cytochrome c peroxidase, mitochondrial (362 aa).

Residues 1–40 (MASASRQILRAASRASTRTAFAPAASRGLAARTIAGRRFY) constitute a mitochondrion transit peptide. The active-site Proton acceptor is His-121. Position 244 (His-244) interacts with heme b. Residue Trp-260 is the Tryptophan radical intermediate of the active site.

This sequence belongs to the peroxidase family. Cytochrome c peroxidase subfamily. Forms a one-to-one complex with cytochrome c. Heme b is required as a cofactor.

The protein resides in the mitochondrion matrix. It is found in the mitochondrion intermembrane space. It carries out the reaction 2 Fe(II)-[cytochrome c] + H2O2 + 2 H(+) = 2 Fe(III)-[cytochrome c] + 2 H2O. Destroys radicals which are normally produced within the cells and which are toxic to biological systems. This is Cytochrome c peroxidase, mitochondrial (CCP1) from Pyricularia oryzae (strain 70-15 / ATCC MYA-4617 / FGSC 8958) (Rice blast fungus).